A 336-amino-acid polypeptide reads, in one-letter code: Fructokinase-2 (336 aa).

The protein belongs to the carbohydrate kinase PfkB family. In terms of tissue distribution, expressed in stem, sheaths, anthers, and panicles (at protein level).

The catalysed reaction is D-fructose + ATP = D-fructose 6-phosphate + ADP + H(+). It participates in glycan biosynthesis; starch biosynthesis. Strongly inhibited at high fructose concentration. In terms of biological role, may play an important role in maintaining the flux of carbon towards starch formation in endosperm. May also be involved in a sugar-sensing pathway. This is Fructokinase-2 (FRK2) from Oryza sativa subsp. japonica (Rice).